The sequence spans 131 residues: Glycine cleavage system H protein (131 aa).

Positions 24-106 (RVTVGISDHA…YGEGWIFVVE (83 aa)) constitute a Lipoyl-binding domain. N6-lipoyllysine is present on Lys-65.

This sequence belongs to the GcvH family. In terms of assembly, the glycine cleavage system is composed of four proteins: P, T, L and H. (R)-lipoate serves as cofactor.

The glycine cleavage system catalyzes the degradation of glycine. The H protein shuttles the methylamine group of glycine from the P protein to the T protein. This is Glycine cleavage system H protein from Xanthomonas campestris pv. campestris (strain 8004).